Consider the following 547-residue polypeptide: Delta-guaiene synthase 3 (547 aa).

Mg(2+) is bound by residues Asp299, Asp303, and Asp444. Positions 299–303 match the DDXXD motif motif; it reads DDTYD.

This sequence belongs to the terpene synthase family. It depends on Mg(2+) as a cofactor.

It catalyses the reaction (2E,6E)-farnesyl diphosphate = delta-guaiene + diphosphate. The catalysed reaction is (2E,6E)-farnesyl diphosphate = alpha-guaiene + diphosphate. It functions in the pathway secondary metabolite biosynthesis; terpenoid biosynthesis. In terms of biological role, sesquiterpene synthase involved in the biosynthesis of delta-guaiene (78.2%) and alpha-guaiene (20.9%), two structures composed of five- and seven-membered rings. Also produces 0.9% of alpha-humulene. This chain is Delta-guaiene synthase 3 (C4), found in Aquilaria crassna (Eagle wood).